A 205-amino-acid chain; its full sequence is N-(5'-phosphoribosyl)anthranilate isomerase (205 aa).

Belongs to the TrpF family.

It carries out the reaction N-(5-phospho-beta-D-ribosyl)anthranilate = 1-(2-carboxyphenylamino)-1-deoxy-D-ribulose 5-phosphate. It participates in amino-acid biosynthesis; L-tryptophan biosynthesis; L-tryptophan from chorismate: step 3/5. The chain is N-(5'-phosphoribosyl)anthranilate isomerase from Thermotoga neapolitana (strain ATCC 49049 / DSM 4359 / NBRC 107923 / NS-E).